Here is a 422-residue protein sequence, read N- to C-terminus: L-threonine dehydratase biosynthetic IlvA (422 aa).

The residue at position 56 (Lys56) is an N6-(pyridoxal phosphate)lysine. Pyridoxal 5'-phosphate is bound by residues Asn83, 189-193, and Ser315; that span reads GGGGL. The region spanning 339–413 is the ACT-like domain; that stretch reads HYFILNFPQR…FDPSNIYINE (75 aa).

Belongs to the serine/threonine dehydratase family. Homotetramer. Pyridoxal 5'-phosphate is required as a cofactor.

The enzyme catalyses L-threonine = 2-oxobutanoate + NH4(+). It functions in the pathway amino-acid biosynthesis; L-isoleucine biosynthesis; 2-oxobutanoate from L-threonine: step 1/1. In terms of biological role, catalyzes the anaerobic formation of alpha-ketobutyrate and ammonia from threonine in a two-step reaction. The first step involved a dehydration of threonine and a production of enamine intermediates (aminocrotonate), which tautomerizes to its imine form (iminobutyrate). Both intermediates are unstable and short-lived. The second step is the nonenzymatic hydrolysis of the enamine/imine intermediates to form 2-ketobutyrate and free ammonia. In the low water environment of the cell, the second step is accelerated by RidA. The chain is L-threonine dehydratase biosynthetic IlvA (ilvA) from Staphylococcus aureus (strain bovine RF122 / ET3-1).